The primary structure comprises 318 residues: Cell growth regulator with EF hand domain protein 1 (318 aa).

An N-terminal signal peptide occupies residues Met1–Ala19. EF-hand domains lie at Ser69 to Pro104 and Pro114 to His149. Ca(2+) is bound by residues Asp82, Asp84, Ser86, Gln88, Glu93, Asp127, Asn129, Asp131, and Glu138. The interval Leu177–Ile318 is disordered. Composition is skewed to basic and acidic residues over residues Gly186–Leu202 and Gly223–Gly233. 3 repeat units span residues Pro219 to Ala235, Pro236 to Ala252, and Pro253 to Ala269. The tract at residues Pro219–Gly286 is 4 X 17 AA approximate tandem repeats of P-G-P-R-G-E-A-G-G-Q-A-E-A-[KR]-G-D-A. Residues Ala235–Pro272 show a composition bias toward low complexity. The stretch at Pro270 to Gly286 is one 4; approximate repeat. The span at Glu281 to Pro293 shows a compositional bias: basic and acidic residues.

Probably digested extracellularly by an unknown serine protease generating extremely hydrophobic bioactive peptides.

The protein resides in the secreted. In terms of biological role, mediates cell-cell adhesion in a calcium-dependent manner. Able to inhibit growth in several cell lines. This Homo sapiens (Human) protein is Cell growth regulator with EF hand domain protein 1.